The chain runs to 962 residues: Putative primase C962R (962 aa).

The 169-residue stretch at 607–775 (ELDARLWIMF…PDPNNSYEKK (169 aa)) folds into the SF3 helicase domain. An ATP-binding site is contributed by 636-643 (GGGCNGKT).

It belongs to the asfivirus helicase C962R family.

The polypeptide is Putative primase C962R (Ornithodoros (relapsing fever ticks)).